The sequence spans 415 residues: Tyrosine--tRNA ligase (415 aa).

Tyrosine 34 provides a ligand contact to L-tyrosine. The 'HIGH' region signature appears at 39–48 (PTSDSLTVGH). Residues tyrosine 164 and glutamine 168 each contribute to the L-tyrosine site. The short motif at 225-229 (KFGKS) is the 'KMSKS' region element. Lysine 228 contacts ATP. The region spanning 348–414 (IPLSEALVKT…GKKNNSLIIL (67 aa)) is the S4 RNA-binding domain.

It belongs to the class-I aminoacyl-tRNA synthetase family. TyrS type 1 subfamily. Homodimer.

It localises to the cytoplasm. The catalysed reaction is tRNA(Tyr) + L-tyrosine + ATP = L-tyrosyl-tRNA(Tyr) + AMP + diphosphate + H(+). Its function is as follows. Catalyzes the attachment of tyrosine to tRNA(Tyr) in a two-step reaction: tyrosine is first activated by ATP to form Tyr-AMP and then transferred to the acceptor end of tRNA(Tyr). The protein is Tyrosine--tRNA ligase of Phytoplasma australiense.